We begin with the raw amino-acid sequence, 338 residues long: MKVFYDKDCDLSLVKGKTVAIIGYGSQGHAHALNLHDSGVKVVVGLRKGGASWNKAANAGLEVAEVAEAVKRADIVMMLLPDENIAAVYRDEVHANIKAGAALAFAHGFNVHYGQVVPREDIDVIMAAPKAPGHTVRSTYSQGGGVPHLIAVYQDKSGSARDVALSYASANGGGRAGIIETNFREETETDLFGEQAVLCGGTVELIKAGFDTLVEAGYAPEMAYFECLHELKLIVDLIYEGGIANMNYSISNNAEFGEYETGPKVVTDATRQAMRECLTAIQTGEYAKKFILENAAGAPTLTSRRRINAESQIEQVGGKLRAMMPWIAANKLVDKAKN.

One can recognise a KARI N-terminal Rossmann domain in the interval 1-181 (MKVFYDKDCD…GGGRAGIIET (181 aa)). NADP(+)-binding positions include 24–27 (YGSQ), Arg47, and Ser52. Residue His107 is part of the active site. Gly133 serves as a coordination point for NADP(+). One can recognise a KARI C-terminal knotted domain in the interval 182 to 327 (NFREETETDL…GKLRAMMPWI (146 aa)). The Mg(2+) site is built by Asp190, Glu194, Glu226, and Glu230. Ser251 provides a ligand contact to substrate.

The protein belongs to the ketol-acid reductoisomerase family. It depends on Mg(2+) as a cofactor.

The catalysed reaction is (2R)-2,3-dihydroxy-3-methylbutanoate + NADP(+) = (2S)-2-acetolactate + NADPH + H(+). It catalyses the reaction (2R,3R)-2,3-dihydroxy-3-methylpentanoate + NADP(+) = (S)-2-ethyl-2-hydroxy-3-oxobutanoate + NADPH + H(+). Its pathway is amino-acid biosynthesis; L-isoleucine biosynthesis; L-isoleucine from 2-oxobutanoate: step 2/4. It functions in the pathway amino-acid biosynthesis; L-valine biosynthesis; L-valine from pyruvate: step 2/4. Involved in the biosynthesis of branched-chain amino acids (BCAA). Catalyzes an alkyl-migration followed by a ketol-acid reduction of (S)-2-acetolactate (S2AL) to yield (R)-2,3-dihydroxy-isovalerate. In the isomerase reaction, S2AL is rearranged via a Mg-dependent methyl migration to produce 3-hydroxy-3-methyl-2-ketobutyrate (HMKB). In the reductase reaction, this 2-ketoacid undergoes a metal-dependent reduction by NADPH to yield (R)-2,3-dihydroxy-isovalerate. This chain is Ketol-acid reductoisomerase (NADP(+)), found in Bordetella pertussis (strain Tohama I / ATCC BAA-589 / NCTC 13251).